The sequence spans 317 residues: Ferrochelatase (317 aa).

2 residues coordinate Fe cation: H187 and E268.

The protein belongs to the ferrochelatase family.

Its subcellular location is the cytoplasm. It catalyses the reaction heme b + 2 H(+) = protoporphyrin IX + Fe(2+). Its pathway is porphyrin-containing compound metabolism; protoheme biosynthesis; protoheme from protoporphyrin-IX: step 1/1. Its function is as follows. Catalyzes the ferrous insertion into protoporphyrin IX. The protein is Ferrochelatase of Campylobacter concisus (strain 13826).